Here is a 103-residue protein sequence, read N- to C-terminus: Large ribosomal subunit protein uL24 (103 aa).

The protein belongs to the universal ribosomal protein uL24 family. Part of the 50S ribosomal subunit.

One of two assembly initiator proteins, it binds directly to the 5'-end of the 23S rRNA, where it nucleates assembly of the 50S subunit. In terms of biological role, one of the proteins that surrounds the polypeptide exit tunnel on the outside of the subunit. This Bacillus cytotoxicus (strain DSM 22905 / CIP 110041 / 391-98 / NVH 391-98) protein is Large ribosomal subunit protein uL24.